Here is a 200-residue protein sequence, read N- to C-terminus: HVA22-like protein k (200 aa).

Positions 176 to 200 (LGEIANGSPVSETNSDSESDSNHED) are disordered.

Belongs to the DP1 family.

In Arabidopsis thaliana (Mouse-ear cress), this protein is HVA22-like protein k (HVA22K).